Here is a 132-residue protein sequence, read N- to C-terminus: Small ribosomal subunit protein uS8 (132 aa).

This sequence belongs to the universal ribosomal protein uS8 family. As to quaternary structure, part of the 30S ribosomal subunit. Contacts proteins S5 and S12.

Its function is as follows. One of the primary rRNA binding proteins, it binds directly to 16S rRNA central domain where it helps coordinate assembly of the platform of the 30S subunit. This is Small ribosomal subunit protein uS8 from Baumannia cicadellinicola subsp. Homalodisca coagulata.